The sequence spans 246 residues: MIENPSPSAANLPEHPSTDASHPRNIRSFVRRTGRTTVGQAKAFADVGPRFLLAYKAEPLDFAAAFGRVAPTILEIGFGMGEATAHIAALSPDKNFLCCEVHTPGVGALLKRIQEQTLGNIRILQHDAVEVIDNMLPAGSLDGVHIFFPDPWHKKKHNKRRLIQAPLIAKLAARLKPGGYLHCATDWQPYAEQILEVLSAEALLKNTADASGGGYAPKPDYRPLTKFENRGIKLGHGVWDVVFTRV.

The segment at 1 to 26 (MIENPSPSAANLPEHPSTDASHPRNI) is disordered. S-adenosyl-L-methionine-binding residues include Glu-75, Glu-100, Asp-127, and Asp-150. Asp-150 is a catalytic residue. Lys-154 contributes to the substrate binding site. Positions 156–161 (KHNKRR) are interaction with RNA. Substrate-binding positions include Asp-186 and 225–228 (TKFE).

It belongs to the class I-like SAM-binding methyltransferase superfamily. TrmB family.

It carries out the reaction guanosine(46) in tRNA + S-adenosyl-L-methionine = N(7)-methylguanosine(46) in tRNA + S-adenosyl-L-homocysteine. The protein operates within tRNA modification; N(7)-methylguanine-tRNA biosynthesis. Its function is as follows. Catalyzes the formation of N(7)-methylguanine at position 46 (m7G46) in tRNA. The polypeptide is tRNA (guanine-N(7)-)-methyltransferase (Polaromonas sp. (strain JS666 / ATCC BAA-500)).